The primary structure comprises 457 residues: ATP synthase subunit beta (457 aa).

An ATP-binding site is contributed by 147-154; it reads GGAGVGKT.

The protein belongs to the ATPase alpha/beta chains family. In terms of assembly, F-type ATPases have 2 components, CF(1) - the catalytic core - and CF(0) - the membrane proton channel. CF(1) has five subunits: alpha(3), beta(3), gamma(1), delta(1), epsilon(1). CF(0) has three main subunits: a(1), b(2) and c(9-12). The alpha and beta chains form an alternating ring which encloses part of the gamma chain. CF(1) is attached to CF(0) by a central stalk formed by the gamma and epsilon chains, while a peripheral stalk is formed by the delta and b chains.

The protein localises to the cell inner membrane. It carries out the reaction ATP + H2O + 4 H(+)(in) = ADP + phosphate + 5 H(+)(out). Its function is as follows. Produces ATP from ADP in the presence of a proton gradient across the membrane. The catalytic sites are hosted primarily by the beta subunits. This Actinobacillus pleuropneumoniae serotype 5b (strain L20) protein is ATP synthase subunit beta.